The sequence spans 353 residues: Protein RecA (353 aa).

Residue 80–87 (GPESSGKT) participates in ATP binding.

Belongs to the RecA family.

It localises to the cytoplasm. In terms of biological role, can catalyze the hydrolysis of ATP in the presence of single-stranded DNA, the ATP-dependent uptake of single-stranded DNA by duplex DNA, and the ATP-dependent hybridization of homologous single-stranded DNAs. It interacts with LexA causing its activation and leading to its autocatalytic cleavage. The sequence is that of Protein RecA from Chlorobium chlorochromatii (strain CaD3).